A 101-amino-acid chain; its full sequence is MVCEKCEKKLGRVITPDTWKDGARNTTESGGRKINENKMLTSKKAGFDPYGKSGFSTCRICKSSVHQSGSHYCQGCAYKKGICAMCGKKVLDTKNYKQTSV.

The protein belongs to the CRIPT family. In terms of assembly, component of the minor spliceosome, which splices U12-type introns.

It localises to the cytoplasm. Its function is as follows. As a component of the minor spliceosome, involved in the splicing of U12-type introns in pre-mRNAs. The sequence is that of Cysteine-rich PDZ-binding protein (cript) from Ictalurus punctatus (Channel catfish).